Consider the following 3184-residue polypeptide: Probable serine/threonine-protein kinase pats1 (3184 aa).

The span at 369–378 (DPPPPPPSNS) shows a compositional bias: pro residues. Disordered stretches follow at residues 369-516 (DPPP…QIPP) and 913-1013 (SITR…TSIL). Residues 379-415 (SPPISKSTSNNNLNVSNYHNNNNNNNNSNSNLSNSGN) show a composition bias toward low complexity. Positions 421–450 (DFQSQNLVKSYNRENSGNSLNSMLHQTSLP) are enriched in polar residues. Over residues 451-512 (NNNNSNVVNN…NNNNSNNNNS (62 aa)) the composition is skewed to low complexity. One can recognise a Myotubularin phosphatase domain in the interval 842–1348 (CFPDHSLLQE…FQDTMWNEYF (507 aa)). Residues 913–934 (SITRATSPEDQNNGSSNYLLTP) show a composition bias toward polar residues. Low complexity predominate over residues 935-993 (NSPNSSSSNLANNNNSNNNNINNNNNNNNNNNNNNNNNSNNNNNNNNNNNNNNNNNNNN). Polar residues predominate over residues 1000–1013 (SRSTTIDNGQTSIL). LRR repeat units lie at residues 1391–1412 (FLET…STLY), 1416–1438 (GLRE…SSLV), 1439–1460 (KLEK…TVVL), 1467–1488 (SLTE…FSMF), 1491–1512 (SLKK…LGML), 1514–1535 (NLIE…GVGI), 1541–1563 (KLCI…GDLK), 1564–1585 (SLEK…FRQL), 1587–1608 (NLEE…VCFL), 1610–1631 (NLKK…ISQL), 1633–1654 (KLMI…IGQL), 1656–1678 (QLVS…MGLL), and 1680–1701 (NLVE…IVSL). Positions 1716–1910 (GQEQCYKMKL…EKLEALVQSQ (195 aa)) constitute a Roc domain. Residues 1716–1910 (GQEQCYKMKL…EKLEALVQSQ (195 aa)) form a small GTPase-like region. GTP is bound by residues 1729–1736 (GQENVGKT), 1797–1801 (DFAGQ), and 1854–1857 (THLD). Positions 1918–2127 (PRSYMLLENL…KCYWKNGMIL (210 aa)) constitute a COR domain. A Protein kinase domain is found at 2247 to 2519 (LMIEELIGEG…RLIKIAEAMF (273 aa)). Residues 2253-2261 (IGEGGAALV) and K2274 each bind ATP. D2379 functions as the Proton acceptor in the catalytic mechanism. Disordered stretches follow at residues 2528-2609 (YQQQ…TISH) and 2652-2671 (NSIN…NSLL). The segment covering 2529 to 2555 (QQQQQQQQQQQQSSPSKSSSTSPIIKS) has biased composition (low complexity). The span at 2556 to 2576 (LNLSTVSELGESSNQTPKQNI) shows a compositional bias: polar residues. WD repeat units follow at residues 2745-2785 (PNQG…KYIQ), 2790-2829 (ANKD…KIKS), 2909-2947 (AHER…HTIE), 2949-2986 (AHSS…LVSE), and 2990-3040 (KHKD…NSRS). Positions 3055–3126 (GSSNSITNSN…NYYYSNNVNS (72 aa)) are enriched in low complexity. The segment at 3055 to 3164 (GSSNSITNSN…TPPGSKGLMQ (110 aa)) is disordered. The span at 3141–3157 (HEQTSPNSATPLSSTPP) shows a compositional bias: polar residues.

This sequence belongs to the protein kinase superfamily. TKL Ser/Thr protein kinase family. ROCO subfamily.

The catalysed reaction is L-seryl-[protein] + ATP = O-phospho-L-seryl-[protein] + ADP + H(+). It catalyses the reaction L-threonyl-[protein] + ATP = O-phospho-L-threonyl-[protein] + ADP + H(+). In terms of biological role, may act as a serine/threonine-protein kinase and guanine-nucleotide releasing factor. Essential regulator of cytokinesis involved in the binding to actomyosin cytoskeleton. The polypeptide is Probable serine/threonine-protein kinase pats1 (pats1) (Dictyostelium discoideum (Social amoeba)).